A 319-amino-acid chain; its full sequence is MTNIVFMGTPDFAVPVLRQLLDDGYRVVAVVTQPDKPKGRKRELVPPPVKVEAQKHGIPVLQPTKIREPEQYEQVLAFAPDLIVTAAFGQILPKALLDAPKYGCINVHASLLPELRGGAPIHYAIWQGKTKTGVTIMYMAEKLDAGDMLTQVEVPIEETDTVGTLHDKLSAAGAKLLSETLPLLLEGNLAPIPQEEEKATYAPNIRREQERIDWAQPGEAIYNHIRAFHPWPVTYTTYDGNVWKIWWGEKVPAPSLASPGTILSLEEDGIVVATGSETAIKITELQPAGKKRMAASEFLRGAGSRLAVGTKLGENNERT.

110–113 contributes to the (6S)-5,6,7,8-tetrahydrofolate binding site; sequence SLLP.

Belongs to the Fmt family.

The catalysed reaction is L-methionyl-tRNA(fMet) + (6R)-10-formyltetrahydrofolate = N-formyl-L-methionyl-tRNA(fMet) + (6S)-5,6,7,8-tetrahydrofolate + H(+). In terms of biological role, attaches a formyl group to the free amino group of methionyl-tRNA(fMet). The formyl group appears to play a dual role in the initiator identity of N-formylmethionyl-tRNA by promoting its recognition by IF2 and preventing the misappropriation of this tRNA by the elongation apparatus. In Geobacillus thermodenitrificans (strain NG80-2), this protein is Methionyl-tRNA formyltransferase.